A 658-amino-acid polypeptide reads, in one-letter code: Endoglucanase 3 (658 aa).

The N-terminal stretch at 1–23 (MQLKNFYPKMSVLGIATVMALTA) is a signal peptide. C24 is lipidated: N-palmitoyl cysteine. C24 carries S-diacylglycerol cysteine lipidation. Positions 24 to 265 (CGDENTQALF…TDSLFIDNIY (242 aa)) are excised as a propeptide. Positions 42 to 83 (ENQVPVSSSDMSPTSSDAVIDPTSSSAAVVDPSTLPAEGPIT) are disordered. Residues 45–58 (VPVSSSDMSPTSSD) show a composition bias toward low complexity. The CBM11 domain maps to 87–277 (GLGTLVDDFE…DSSEVEKDQP (191 aa)). E448 serves as the catalytic Proton donor. The active-site Nucleophile is the E597.

The protein belongs to the glycosyl hydrolase 5 (cellulase A) family. Monomer. In terms of processing, may be a lipoprotein and may be glycosylated.

The protein localises to the membrane. It carries out the reaction Endohydrolysis of (1-&gt;4)-beta-D-glucosidic linkages in cellulose, lichenin and cereal beta-D-glucans.. Exhibits both endoglucanase and cellobiosidase activities. The polypeptide is Endoglucanase 3 (cel-3) (Fibrobacter succinogenes (strain ATCC 19169 / S85)).